The primary structure comprises 503 residues: Cytochrome P450 3A29 (503 aa).

C442 is a heme binding site.

Belongs to the cytochrome P450 family. It depends on heme as a cofactor.

It localises to the endoplasmic reticulum membrane. The protein localises to the microsome membrane. It catalyses the reaction an organic molecule + reduced [NADPH--hemoprotein reductase] + O2 = an alcohol + oxidized [NADPH--hemoprotein reductase] + H2O + H(+). In terms of biological role, cytochromes P450 are a group of heme-thiolate monooxygenases. In liver microsomes, this enzyme is involved in an NADPH-dependent electron transport pathway. It oxidizes a variety of structurally unrelated compounds, including steroids, fatty acids, and xenobiotics. In Sus scrofa (Pig), this protein is Cytochrome P450 3A29 (CYP3A29).